The primary structure comprises 511 residues: Putative thymidine phosphorylase 1 (511 aa).

This sequence belongs to the thymidine/pyrimidine-nucleoside phosphorylase family. Type 2 subfamily.

It catalyses the reaction thymidine + phosphate = 2-deoxy-alpha-D-ribose 1-phosphate + thymine. This chain is Putative thymidine phosphorylase 1, found in Acidovorax sp. (strain JS42).